A 914-amino-acid polypeptide reads, in one-letter code: Protein translocase subunit SecA (914 aa).

ATP is bound by residues Q87, 105 to 109 (GEGKT), and D500. C898, C900, C909, and H910 together coordinate Zn(2+).

The protein belongs to the SecA family. As to quaternary structure, monomer and homodimer. Part of the essential Sec protein translocation apparatus which comprises SecA, SecYEG and auxiliary proteins SecDF-YajC and YidC. The cofactor is Zn(2+).

The protein resides in the cell inner membrane. It is found in the cytoplasm. The enzyme catalyses ATP + H2O + cellular proteinSide 1 = ADP + phosphate + cellular proteinSide 2.. In terms of biological role, part of the Sec protein translocase complex. Interacts with the SecYEG preprotein conducting channel. Has a central role in coupling the hydrolysis of ATP to the transfer of proteins into and across the cell membrane, serving as an ATP-driven molecular motor driving the stepwise translocation of polypeptide chains across the membrane. The protein is Protein translocase subunit SecA of Acidithiobacillus ferrooxidans (strain ATCC 23270 / DSM 14882 / CIP 104768 / NCIMB 8455) (Ferrobacillus ferrooxidans (strain ATCC 23270)).